A 119-amino-acid polypeptide reads, in one-letter code: Large ribosomal subunit protein uL18 (119 aa).

Residues Met-1 to Ser-23 are disordered. A compositionally biased stretch (basic residues) spans Thr-10–Gly-20.

The protein belongs to the universal ribosomal protein uL18 family. As to quaternary structure, part of the 50S ribosomal subunit; part of the 5S rRNA/L5/L18/L25 subcomplex. Contacts the 5S and 23S rRNAs.

This is one of the proteins that bind and probably mediate the attachment of the 5S RNA into the large ribosomal subunit, where it forms part of the central protuberance. This Lacticaseibacillus casei (strain BL23) (Lactobacillus casei) protein is Large ribosomal subunit protein uL18.